A 304-amino-acid polypeptide reads, in one-letter code: Ribonuclease BN (304 aa).

The Zn(2+) site is built by His-63, His-65, Asp-67, His-68, His-140, Asp-211, and His-269. The active-site Proton acceptor is the Asp-67.

This sequence belongs to the RNase Z family. RNase BN subfamily. In terms of assembly, homodimer. Zn(2+) serves as cofactor.

In terms of biological role, zinc phosphodiesterase, which has both exoribonuclease and endoribonuclease activities. The protein is Ribonuclease BN of Erwinia tasmaniensis (strain DSM 17950 / CFBP 7177 / CIP 109463 / NCPPB 4357 / Et1/99).